We begin with the raw amino-acid sequence, 191 residues long: Putative manganese efflux pump MntP (191 aa).

A run of 6 helical transmembrane segments spans residues 3–23 (PISI…AAIG), 37–57 (LRAG…GWLL), 65–85 (VEAF…IHMI), 107–129 (WKLA…GLAF), 144–164 (CTLT…SMVG), and 169–189 (IIGG…HLHG).

This sequence belongs to the MntP (TC 9.B.29) family.

The protein localises to the cell inner membrane. Probably functions as a manganese efflux pump. In Stenotrophomonas maltophilia (strain K279a), this protein is Putative manganese efflux pump MntP.